Reading from the N-terminus, the 394-residue chain is Imidazolonepropionase (394 aa).

Residues His61 and His63 each contribute to the Fe(3+) site. Zn(2+)-binding residues include His61 and His63. Residues Arg70, Tyr133, and His164 each contribute to the 4-imidazolone-5-propanoate site. Tyr133 contacts N-formimidoyl-L-glutamate. His225 provides a ligand contact to Fe(3+). His225 serves as a coordination point for Zn(2+). 4-imidazolone-5-propanoate is bound at residue Glu228. Fe(3+) is bound at residue Asp299. Asp299 is a binding site for Zn(2+).

This sequence belongs to the metallo-dependent hydrolases superfamily. HutI family. Zn(2+) is required as a cofactor. Requires Fe(3+) as cofactor.

The protein localises to the cytoplasm. It carries out the reaction 4-imidazolone-5-propanoate + H2O = N-formimidoyl-L-glutamate. It participates in amino-acid degradation; L-histidine degradation into L-glutamate; N-formimidoyl-L-glutamate from L-histidine: step 3/3. In terms of biological role, catalyzes the hydrolytic cleavage of the carbon-nitrogen bond in imidazolone-5-propanoate to yield N-formimidoyl-L-glutamate. It is the third step in the universal histidine degradation pathway. The chain is Imidazolonepropionase from Picrophilus torridus (strain ATCC 700027 / DSM 9790 / JCM 10055 / NBRC 100828 / KAW 2/3).